A 250-amino-acid polypeptide reads, in one-letter code: Glycerol-1-phosphate phosphohydrolase 2 (250 aa).

Asp18 acts as the Nucleophile in catalysis. Positions 18 and 20 each coordinate Mg(2+). Residue Asp20 is the Proton donor of the active site. Residue Lys64 forms a Glycyl lysine isopeptide (Lys-Gly) (interchain with G-Cter in ubiquitin) linkage. Phosphoserine is present on Ser90. Lys144 participates in a covalent cross-link: Glycyl lysine isopeptide (Lys-Gly) (interchain with G-Cter in ubiquitin). Residue Asp179 coordinates Mg(2+).

The protein belongs to the HAD-like hydrolase superfamily. DOG/GPP family. In terms of assembly, monomer. Requires Mg(2+) as cofactor.

Its subcellular location is the cytoplasm. The protein resides in the nucleus. It catalyses the reaction sn-glycerol 1-phosphate + H2O = glycerol + phosphate. It carries out the reaction sn-glycerol 3-phosphate + H2O = glycerol + phosphate. Glycerol-1-phosphate phosphohydrolase involved in glycerol biosynthesis. Plays a role in osmoadaptation. The chain is Glycerol-1-phosphate phosphohydrolase 2 from Saccharomyces cerevisiae (strain ATCC 204508 / S288c) (Baker's yeast).